The following is a 647-amino-acid chain: tRNA 5-methylaminomethyl-2-thiouridine biosynthesis bifunctional protein MnmC (647 aa).

The segment at methionine 1–serine 227 is tRNA (mnm(5)s(2)U34)-methyltransferase. Positions valine 256–lysine 647 are FAD-dependent cmnm(5)s(2)U34 oxidoreductase.

In the N-terminal section; belongs to the methyltransferase superfamily. tRNA (mnm(5)s(2)U34)-methyltransferase family. This sequence in the C-terminal section; belongs to the DAO family. Requires FAD as cofactor.

It is found in the cytoplasm. The enzyme catalyses 5-aminomethyl-2-thiouridine(34) in tRNA + S-adenosyl-L-methionine = 5-methylaminomethyl-2-thiouridine(34) in tRNA + S-adenosyl-L-homocysteine + H(+). Functionally, catalyzes the last two steps in the biosynthesis of 5-methylaminomethyl-2-thiouridine (mnm(5)s(2)U) at the wobble position (U34) in tRNA. Catalyzes the FAD-dependent demodification of cmnm(5)s(2)U34 to nm(5)s(2)U34, followed by the transfer of a methyl group from S-adenosyl-L-methionine to nm(5)s(2)U34, to form mnm(5)s(2)U34. The sequence is that of tRNA 5-methylaminomethyl-2-thiouridine biosynthesis bifunctional protein MnmC from Leptospira interrogans serogroup Icterohaemorrhagiae serovar Lai (strain 56601).